The primary structure comprises 407 residues: 1-deoxy-D-xylulose 5-phosphate reductoisomerase (407 aa).

NADPH is bound by residues T25, G26, S27, I28, N53, and N136. A 1-deoxy-D-xylulose 5-phosphate-binding site is contributed by K137. E138 is a binding site for NADPH. D162 is a binding site for Mn(2+). The 1-deoxy-D-xylulose 5-phosphate site is built by S163, E164, S188, and H211. Position 164 (E164) interacts with Mn(2+). G217 provides a ligand contact to NADPH. The 1-deoxy-D-xylulose 5-phosphate site is built by S224, N229, K230, and E233. E233 provides a ligand contact to Mn(2+).

It belongs to the DXR family. Requires Mg(2+) as cofactor. Mn(2+) is required as a cofactor.

The enzyme catalyses 2-C-methyl-D-erythritol 4-phosphate + NADP(+) = 1-deoxy-D-xylulose 5-phosphate + NADPH + H(+). It functions in the pathway isoprenoid biosynthesis; isopentenyl diphosphate biosynthesis via DXP pathway; isopentenyl diphosphate from 1-deoxy-D-xylulose 5-phosphate: step 1/6. Functionally, catalyzes the NADPH-dependent rearrangement and reduction of 1-deoxy-D-xylulose-5-phosphate (DXP) to 2-C-methyl-D-erythritol 4-phosphate (MEP). The protein is 1-deoxy-D-xylulose 5-phosphate reductoisomerase of Bradyrhizobium diazoefficiens (strain JCM 10833 / BCRC 13528 / IAM 13628 / NBRC 14792 / USDA 110).